Reading from the N-terminus, the 718-residue chain is Polyribonucleotide nucleotidyltransferase (718 aa).

Residues Asp496 and Asp502 each coordinate Mg(2+). The KH domain maps to 563–622 (PRLLTIKIDPDMIGLVIGPGGKTIKGITEETGAKIDIEDDGTVTISAVDENKAKRARNIV). Positions 632–700 (GDVYAGRVTR…NKGRINLTRL (69 aa)) constitute an S1 motif domain.

In terms of assembly, may form homodimers or higher order multimers. Interacts with RNase E (rne). Mg(2+) is required as a cofactor.

It is found in the cytoplasm. It carries out the reaction RNA(n+1) + phosphate = RNA(n) + a ribonucleoside 5'-diphosphate. In terms of biological role, involved in mRNA degradation. Catalyzes the phosphorolysis of single-stranded polyribonucleotides processively in the 3'- to 5'-direction. In Nostoc sp. (strain PCC 7120 / SAG 25.82 / UTEX 2576), this protein is Polyribonucleotide nucleotidyltransferase.